The sequence spans 320 residues: NAC domain-containing protein 20 (320 aa).

One can recognise an NAC domain in the interval 14 to 170 (LPPGFRFHPT…DWAVCRIFHK (157 aa)). The DNA-binding element occupies 114–176 (IGMKKTLVFY…IFHKSSGIKK (63 aa)).

In terms of assembly, forms homodimers. Forms heterodimers with NAC26. Expressed in developing seeds.

The protein localises to the nucleus. The protein resides in the endoplasmic reticulum. Transcription factor that acts redundantly with NAC26 to regulate the expression of genes involved in the biosynthesis of starch and storage proteins in grain. Directly binds to the promoters of starch synthase 1 (SS1), pullulanase (PUL), glutelin A1 (GLUA1), glutelins B4 and B5 (GLUB4 and GLUB5), alpha-globulin and 16 kDa prolamin, and activates their expression. Possesses transactivation activity in yeast. The protein is NAC domain-containing protein 20 of Oryza sativa subsp. indica (Rice).